Reading from the N-terminus, the 428-residue chain is Divergent protein kinase domain 1A (428 aa).

Topologically, residues 1-27 (MARSLCPGAWLRKPYYLQARFSYVRMK) are cytoplasmic. The chain crosses the membrane as a helical span at residues 28–48 (YLFFSWLVVFVGSWIIYVQYS). Topologically, residues 49-428 (TYTELCRGKD…WKKISYTNDS (380 aa)) are lumenal.

Belongs to the DIPK family. In terms of processing, among the many cysteines in the lumenal domain, most are probably involved in disulfide bonds.

The protein localises to the endoplasmic reticulum membrane. The chain is Divergent protein kinase domain 1A from Homo sapiens (Human).